A 103-amino-acid polypeptide reads, in one-letter code: UPF0145 protein Rsph17025_2361 (103 aa).

Belongs to the UPF0145 family.

The protein is UPF0145 protein Rsph17025_2361 of Cereibacter sphaeroides (strain ATCC 17025 / ATH 2.4.3) (Rhodobacter sphaeroides).